The sequence spans 157 residues: Transcriptional regulator MraZ (157 aa).

2 consecutive SpoVT-AbrB domains span residues 7–54 and 83–126; these read TYEC…PMKE and VRII…DKDL.

It belongs to the MraZ family. In terms of assembly, forms oligomers.

It localises to the cytoplasm. The protein resides in the nucleoid. This Flavobacterium psychrophilum (strain ATCC 49511 / DSM 21280 / CIP 103535 / JIP02/86) protein is Transcriptional regulator MraZ.